A 20-amino-acid chain; its full sequence is Agglutinin beta-2 chain (20 aa).

Residues Gly-1 to Asn-20 form a disordered region.

Belongs to the jacalin lectin family. Formed of four alpha chains and four beta chains.

In terms of biological role, D-galactose-specific lectin, binds the T-antigen structure Gal-beta1,3-GalNAc. The chain is Agglutinin beta-2 chain from Maclura pomifera (Osage orange).